We begin with the raw amino-acid sequence, 590 residues long: Neuronal PAS domain-containing protein 1 (590 aa).

The bHLH domain occupies 45-98 (QRKEKSRNAARSRRGKENLEFFELAKLLPLPGAISSQLDKASIVRLSVTYLRLR). Positions 135-207 (EQHLGGHILQ…LGLRTPTPGP (73 aa)) constitute a PAS 1 domain. Residues 198 to 229 (LGLRTPTPGPPTPPSVSSSSSSSSSLADTPEI) form a disordered region. Over residues 212–222 (SVSSSSSSSSS) the composition is skewed to low complexity. The region spanning 293–359 (APLAELPLHG…IRQSHVDLLD (67 aa)) is the PAS 2 domain. Positions 365–408 (TGYYRWLQRAGGFVWLQSVATVAGSGKSPGEHHVLWVSHVLSQA) constitute a PAC domain. The disordered stretch occupies residues 425–494 (ACEEASSPGP…SHPATPRPEF (70 aa)). Residues 433–442 (GPEPTEPEPP) are compositionally biased toward pro residues. Basic and acidic residues predominate over residues 463–476 (IKVEPGPRETKGSE).

Efficient DNA binding requires dimerization with another bHLH protein. Interacts with ARNT; forms a heterodimer that binds core DNA sequence 5'-[AG]CGTG-3' within the hypoxia response element (HRE) leading to a transcriptional repressor on its target gene TH.

Its subcellular location is the nucleus. Its function is as follows. May control regulatory pathways relevant to schizophrenia and to psychotic illness. May play a role in late central nervous system development by modulating EPO expression in response to cellular oxygen level. Forms a heterodimer that binds core DNA sequence 5'-TACGTG-3' within the hypoxia response element (HRE) leading to transcriptional repression on its target gene TH. In Homo sapiens (Human), this protein is Neuronal PAS domain-containing protein 1 (NPAS1).